Reading from the N-terminus, the 80-residue chain is Large ribosomal subunit protein uL29 (80 aa).

The protein belongs to the universal ribosomal protein uL29 family.

This chain is Large ribosomal subunit protein uL29 (rpmC), found in Mycobacterium leprae (strain TN).